Reading from the N-terminus, the 384-residue chain is V-type proton ATPase subunit C 2 (384 aa).

Belongs to the V-ATPase C subunit family. As to quaternary structure, V-ATPase is a heteromultimeric enzyme made up of two complexes: the ATP-hydrolytic V1 complex and the proton translocation V0 complex. The V1 complex consists of three catalytic AB heterodimers that form a heterohexamer, three peripheral stalks each consisting of EG heterodimers, one central rotor including subunits D and F, and the regulatory subunits C and H. The proton translocation complex V0 consists of the proton transport subunit a, a ring of proteolipid subunits c9c'', rotary subunit d, subunits e and f, and the accessory subunits vah-19/Ac45 and vah-20/PRR.

Functionally, subunit of the V1 complex of vacuolar(H+)-ATPase (V-ATPase), a multisubunit enzyme composed of a peripheral complex (V1) that hydrolyzes ATP and a membrane integral complex (V0) that translocates protons. V-ATPase is responsible for acidifying and maintaining the pH of intracellular compartments and in some cell types, is targeted to the plasma membrane, where it is responsible for acidifying the extracellular environment. Subunit C is necessary for the assembly of the catalytic sector of the enzyme and is likely to have a specific function in its catalytic activity. In Ascidia sydneiensis samea (Vanadium-rich ascidian), this protein is V-type proton ATPase subunit C 2 (VATC).